The chain runs to 172 residues: Single-stranded DNA-binding protein 2 (172 aa).

In terms of domain architecture, SSB spans 6-111 (VNKVILVGHI…VIVNVGGTMQ (106 aa)). The DNA-binding element occupies 55-61 (WHRVVVF). Residues 113-172 (LGRHNSQPQQEPQTPPTAAKGEGKAVKGAGNAAKGKNAAAPQQPPAQPDPAYDFDDDIPF) form a disordered region. The segment covering 119–153 (QPQQEPQTPPTAAKGEGKAVKGAGNAAKGKNAAAP) has biased composition (low complexity). The Important for interaction with partner proteins motif lies at 167 to 172 (DDDIPF).

Homotetramer.

In terms of biological role, plays an important role in DNA replication, recombination and repair. Binds to ssDNA and to an array of partner proteins to recruit them to their sites of action during DNA metabolism. This Salmonella typhimurium (strain LT2 / SGSC1412 / ATCC 700720) protein is Single-stranded DNA-binding protein 2 (ssb2).